A 212-amino-acid chain; its full sequence is Cytochrome c biogenesis ATP-binding export protein CcmA (212 aa).

The 203-residue stretch at 7 to 209 (LSLQNLSCQR…HLQKLNLAAY (203 aa)) folds into the ABC transporter domain. Residue 39 to 46 (GHNGIGKT) coordinates ATP.

Belongs to the ABC transporter superfamily. CcmA exporter (TC 3.A.1.107) family. As to quaternary structure, the complex is composed of two ATP-binding proteins (CcmA) and two transmembrane proteins (CcmB).

The protein localises to the cell inner membrane. It catalyses the reaction heme b(in) + ATP + H2O = heme b(out) + ADP + phosphate + H(+). Functionally, part of the ABC transporter complex CcmAB involved in the biogenesis of c-type cytochromes; once thought to export heme, this seems not to be the case, but its exact role is uncertain. Responsible for energy coupling to the transport system. In Haemophilus influenzae (strain ATCC 51907 / DSM 11121 / KW20 / Rd), this protein is Cytochrome c biogenesis ATP-binding export protein CcmA.